A 671-amino-acid chain; its full sequence is Autophagy-related protein 22-2 (671 aa).

Polar residues-rich tracts occupy residues 1–10 (MVPRNFSESQ) and 19–34 (PSNS…SSSF). Residues 1-67 (MVPRNFSESQ…RDVPAQYAGE (67 aa)) are disordered. N-linked (GlcNAc...) asparagine glycosylation is found at Asn-5 and Asn-21. Positions 39-60 (ERSSSADHDSMGPDIGSAHRDV) are enriched in basic and acidic residues. 4 helical membrane passes run 83–103 (YGFA…PITL), 155–175 (SFAM…VVSI), 188–208 (LLLF…TVVP), and 212–232 (LLGA…FVLL). The tract at residues 251–271 (PDFSPEFRPSSVDESPPEHSL) is disordered. The chain crosses the membrane as a helical span at residues 324–344 (IGIGYSAGLFLQCVSIVIIWL). The N-linked (GlcNAc...) asparagine glycan is linked to Asn-346. 7 consecutive transmembrane segments (helical) span residues 354 to 374 (LVLF…ALWL), 422 to 442 (FFLA…GTAV), 457 to 477 (GLIN…WAAI), 491 to 511 (ACIC…LPIV), 523 to 543 (WEMY…SSYC), 560 to 582 (YALY…GAIV), and 591 to 611 (AFWF…FVNV). Positions 634-671 (ESAGEGSRGSSIDHESGQNEGLIYPRVGENAGRGRNDI) are disordered.

The protein belongs to the ATG22 family.

Its subcellular location is the vacuole membrane. Its function is as follows. Vacuolar effluxer which mediate the efflux of amino acids resulting from autophagic degradation. The release of autophagic amino acids allows the maintenance of protein synthesis and viability during nitrogen starvation. The protein is Autophagy-related protein 22-2 (atg22-2) of Sclerotinia sclerotiorum (strain ATCC 18683 / 1980 / Ss-1) (White mold).